Reading from the N-terminus, the 127-residue chain is uncharacterized protein (127 aa).

Helical transmembrane passes span 42–62 (LLIS…IAFI) and 78–98 (GLPI…YYFL).

It is found in the membrane. This is an uncharacterized protein from Schizosaccharomyces pombe (strain 972 / ATCC 24843) (Fission yeast).